Here is a 415-residue protein sequence, read N- to C-terminus: T-cell-specific guanine nucleotide triphosphate-binding protein 1 (415 aa).

In terms of domain architecture, IRG-type G spans 55-237 (APLHIAVTGE…PKLETKLLQD (183 aa)). Residues glycine 66, glycine 68, lysine 69, and serine 70 each contribute to the GDP site. (Microbial infection) Phosphothreonine; by ROP17 is present on threonine 89. Glycine 90, lysine 171, aspartate 173, and asparagine 219 together coordinate GDP.

The protein belongs to the TRAFAC class dynamin-like GTPase superfamily. IRG family. In terms of assembly, monomer, homodimer or homotetramer in the presence of GTP. Forms higher order homooligomers in GTP-dependent manner. As to quaternary structure, (Microbial infection) Interacts with Toxoplasma gondii ROP18. Post-translationally, (Microbial infection) Phosphorylated by Toxoplasma gondii ROP17; the phosphorylation leads to disassembly of IRGB6 (TGTP1/TGTP2) polymers into monomers and dimers. Phosphorylated by Toxoplasma gondii ROP18. Expressed in thymus and lymph nodes, predominantly T-cells. Not expressed by immature CD4(+) CD8(+) thymocytes (at protein level). Expressed in IFNG-stimulated macrophages. Expressed at low levels in unstimulated astrocytes. Due to sequence similarity with Tgtp2, it is impossible to assign unambiguously experimental data published in the literature to Tgtp1 or Tgtp2 gene.

Its subcellular location is the cytoplasm. The protein localises to the endoplasmic reticulum. It localises to the golgi apparatus. The protein resides in the parasitophorous vacuole membrane. It carries out the reaction GTP + H2O = GDP + phosphate + H(+). Functionally, involved in innate cell-autonomous resistance to intracellular pathogens, such as Toxoplasma gondii. During avirulent type II T.gondii infection, recruited to the parasitophorous vacuole (PV) membrane, leading to PV vesiculation and rupture, and subsequent digestion of the parasite within the cytosol. Not recruited to virulent type I T.gondii PV membrane. May confer an antiviral state for vesicular stomatitis virus. The sequence is that of T-cell-specific guanine nucleotide triphosphate-binding protein 1 (Tgtp1) from Mus musculus (Mouse).